Reading from the N-terminus, the 590-residue chain is Plasmepsin V (590 aa).

Residues 1–544 (MNNYFLRKEN…EKENIFLKVS (544 aa)) lie on the Lumenal side of the membrane. The stretch at 33-81 (CNNVENKIDNVGKKIENVGKKIGDMENKNDNVENKNDNVGNKNDNVKNA) forms a coiled coil. Residues 100–514 (YFLDIDIGKP…DLQQNQIAFI (415 aa)) enclose the Peptidase A1 domain. Aspartate 118 is a catalytic residue. Intrachain disulfides connect cysteine 128–cysteine 211, cysteine 131–cysteine 134, cysteine 155–cysteine 166, cysteine 160–cysteine 171, cysteine 259–cysteine 518, cysteine 389–cysteine 434, and cysteine 443–cysteine 479. The segment covering 282–291 (KEKQKMDKSD) has biased composition (basic and acidic residues). Residues 282-316 (KEKQKMDKSDNNSSNKGNVSIKLKNNDKNDDEENN) are disordered. Over residues 292–304 (NNSSNKGNVSIKL) the composition is skewed to low complexity. Residue aspartate 365 is part of the active site. A helical membrane pass occupies residues 545–565 (YINLYCLWLLLALTILLSLIL). Over 566–590 (YVRKMFYMDYFPLSDQNKSPIQEST) the chain is Cytoplasmic.

It belongs to the peptidase A1 family. Component of a complex composed of SPC25 and PMV; the interaction is mediated via the transmembrane domains. The complex interacts with the SEC61 channel-forming translocon complex and is involved in the recognition and import of PEXEL motif-containing proteins into the ER for subsequent export. It is not clear if the zymogen has a cleavable propeptide. In vitro, appears to be cleaved between Asn-80 and Ala-81. Cleavage of the putative propeptide is dispensable for catalytic activity.

It is found in the endoplasmic reticulum membrane. Its activity is regulated as follows. Inhibited by peptidomimetic inhibitor WEHI-842. Inhibited by Cu(2+) and Hg(2+). Its function is as follows. During the asexual blood stage, plays an essential role in the export of several proteins into the host erythrocytes by cleaving the pentameric localization motif RxLxE/Q/D (termed Plasmodium export element (PEXEL)) located downstream of the N-terminal secretory signal sequence. Specifically, cleaves after the leucine residue in the RxLxE/Q/D (or RxLxxE) motif of exported proteins including RESA, EMP2, EMP3, KAHRP, RIF/Rifin and STEVOR. Also, by regulating protein export, plays an essential role in gametocyte development and thus, parasite transmission to the mosquito vector. The chain is Plasmepsin V from Plasmodium falciparum (isolate 3D7).